Reading from the N-terminus, the 262-residue chain is Elongator complex protein 5 (262 aa).

Disordered regions lie at residues 181 to 214 and 229 to 262; these read TPLD…FKIE and PYER…DLCI. Positions 200–211 are enriched in polar residues; sequence AEQTTEPASSTF. Acidic residues predominate over residues 246-262; that stretch reads DADDDFDEEDPDEDLCI.

The protein belongs to the ELP5 family. In terms of assembly, component of the elongator complex composed of Elp1, Elp2, Elp3, Elp4, Elp5 and Elp6. The elongator complex associates with and stabilizes microtubules; efficient interaction requires the full complex.

The protein resides in the cytoplasm. Its subcellular location is the nucleus. It localises to the cytoskeleton. It is found in the spindle. It participates in tRNA modification; 5-methoxycarbonylmethyl-2-thiouridine-tRNA biosynthesis. Component of the elongator complex, which is required for multiple tRNA modifications, including mcm5U (5-methoxycarbonylmethyl uridine), mcm5s2U (5-methoxycarbonylmethyl-2-thiouridine), and ncm5U (5-carbamoylmethyl uridine). The elongator complex catalyzes the formation of carboxymethyluridine in the wobble base at position 34 in tRNAs. Binding by the elongator complex stabilizes microtubules and promotes their growth. This induces central spindle asymmetry, promoting polarized signaling endosome trafficking during asymmetric cell division and cell fate assignation of sensory organ precursor cells. This Drosophila melanogaster (Fruit fly) protein is Elongator complex protein 5.